The sequence spans 245 residues: 8-amino-3,8-dideoxy-manno-octulosonate cytidylyltransferase (245 aa).

The protein belongs to the KdsB family.

It localises to the cytoplasm. The catalysed reaction is 8-amino-3,8-dideoxy-alpha-D-manno-octulosonate + CTP = CMP-8-amino-3,8-dideoxy-alpha-D-manno-oct-2-ulosonate + diphosphate. Its pathway is bacterial outer membrane biogenesis; lipopolysaccharide biosynthesis. Functionally, activates KDO8N (a required 8-carbon sugar) for incorporation into bacterial lipopolysaccharide in the Shewanella genus. This Shewanella sediminis (strain HAW-EB3) protein is 8-amino-3,8-dideoxy-manno-octulosonate cytidylyltransferase.